The following is a 150-amino-acid chain: Transthyretin (150 aa).

Residues 1–20 (MGSSSLLLVCLAGMVYLTEA) form the signal peptide. Cys33 carries the post-translational modification Sulfocysteine. The L-thyroxine site is built by Lys38, Glu77, and Ser140.

It belongs to the transthyretin family. In terms of assembly, homotetramer. Dimer of dimers. In the homotetramer, subunits assemble around a central channel that can accommodate two ligand molecules. Interacts with RBP4. Sulfonation of the reactive cysteine Cys-33 enhances the stability of the native conformation of TTR, avoiding misassembly of the protein leading to amyloid formation. As to expression, detected in choroid plexus (at protein level). Detected in choroid plexus.

Its subcellular location is the secreted. Its function is as follows. Thyroid hormone-binding protein. Probably transports thyroxine from the bloodstream to the brain. This Tiliqua rugosa (Shingleback lizard) protein is Transthyretin (TTR).